We begin with the raw amino-acid sequence, 457 residues long: tRNA modification GTPase MnmE (457 aa).

The (6S)-5-formyl-5,6,7,8-tetrahydrofolate site is built by Arg-25, Glu-87, and Arg-126. One can recognise a TrmE-type G domain in the interval Gly-223–Phe-377. Asn-233 lines the K(+) pocket. Residues Asn-233–Ser-238, Thr-252–Thr-258, and Asp-277–Gly-280 each bind GTP. Mg(2+) is bound at residue Ser-237. Positions 252, 254, and 257 each coordinate K(+). Thr-258 serves as a coordination point for Mg(2+). A (6S)-5-formyl-5,6,7,8-tetrahydrofolate-binding site is contributed by Lys-457.

The protein belongs to the TRAFAC class TrmE-Era-EngA-EngB-Septin-like GTPase superfamily. TrmE GTPase family. Homodimer. Heterotetramer of two MnmE and two MnmG subunits. K(+) serves as cofactor.

The protein localises to the cytoplasm. Exhibits a very high intrinsic GTPase hydrolysis rate. Involved in the addition of a carboxymethylaminomethyl (cmnm) group at the wobble position (U34) of certain tRNAs, forming tRNA-cmnm(5)s(2)U34. The chain is tRNA modification GTPase MnmE from Streptococcus gordonii (strain Challis / ATCC 35105 / BCRC 15272 / CH1 / DL1 / V288).